The sequence spans 190 residues: Peptidyl-tRNA hydrolase (190 aa).

Tyr14 lines the tRNA pocket. The active-site Proton acceptor is the His19. Positions 64, 66, and 112 each coordinate tRNA.

The protein belongs to the PTH family. In terms of assembly, monomer.

The protein localises to the cytoplasm. It carries out the reaction an N-acyl-L-alpha-aminoacyl-tRNA + H2O = an N-acyl-L-amino acid + a tRNA + H(+). Hydrolyzes ribosome-free peptidyl-tRNAs (with 1 or more amino acids incorporated), which drop off the ribosome during protein synthesis, or as a result of ribosome stalling. Its function is as follows. Catalyzes the release of premature peptidyl moieties from peptidyl-tRNA molecules trapped in stalled 50S ribosomal subunits, and thus maintains levels of free tRNAs and 50S ribosomes. This Chlorobium limicola (strain DSM 245 / NBRC 103803 / 6330) protein is Peptidyl-tRNA hydrolase.